Here is a 94-residue protein sequence, read N- to C-terminus: Alpha-galactosyl-binding lectin (94 aa).

Homodimer. In terms of processing, contains three disulfide bonds.

In terms of biological role, alpha-galactosyl-binding lectin with preference for galactose-alpha-1,4-galactose. The chain is Alpha-galactosyl-binding lectin from Lyophyllum decastes (Fried chicken mushroom).